Consider the following 529-residue polypeptide: Bifunctional purine biosynthesis protein PurH (529 aa).

The 148-residue stretch at 1–148 folds into the MGS-like domain; that stretch reads MQQRRPVRRA…KNHKDVAIVV (148 aa).

Belongs to the PurH family.

The catalysed reaction is (6R)-10-formyltetrahydrofolate + 5-amino-1-(5-phospho-beta-D-ribosyl)imidazole-4-carboxamide = 5-formamido-1-(5-phospho-D-ribosyl)imidazole-4-carboxamide + (6S)-5,6,7,8-tetrahydrofolate. The enzyme catalyses IMP + H2O = 5-formamido-1-(5-phospho-D-ribosyl)imidazole-4-carboxamide. Its pathway is purine metabolism; IMP biosynthesis via de novo pathway; 5-formamido-1-(5-phospho-D-ribosyl)imidazole-4-carboxamide from 5-amino-1-(5-phospho-D-ribosyl)imidazole-4-carboxamide (10-formyl THF route): step 1/1. The protein operates within purine metabolism; IMP biosynthesis via de novo pathway; IMP from 5-formamido-1-(5-phospho-D-ribosyl)imidazole-4-carboxamide: step 1/1. In Klebsiella pneumoniae subsp. pneumoniae (strain ATCC 700721 / MGH 78578), this protein is Bifunctional purine biosynthesis protein PurH.